The chain runs to 458 residues: MVLSQEHRDLLDAFQKEVEQRRPGDLLQFAANYFNKKLEEERLFVRSQESLALSKGVVLFPGSEGCGANRAAGSPDARKTGEDEDVMFKLPFVEHDPHSRHIYDDNKHGHDSCDPHTSFSREPGAGLFQGGYNMGQEAQKEAQTDFDPKASEVSSILKQRNVPRKSGVNSKPLPMNFNAERRTSVSGETLKPDHFSDWTPENYTEKTREQLKGLESAVGKNFLFNKLDSDSKTLVINSLEEKLVSKGQEIIRQGDEGDYFYIVEKGTVDFFLDDRKVNTYGPGSCFGELALMYNSPRAVTAVAATDCVLWALDRLTFRRILLSGSFKKRLLYDDFLKSMPLLKSLSNYDRAKLADALETEYYEAGQQVISEGDVGENFYLIEYGEADVSKRGVGVVQHLKKGDYFGEVALLNDLPRQATVTATTKLKVATLGKSGFQRLLGPVVEVLRLNDPTRADKR.

A dimerization and phosphorylation region spans residues 28–222; that stretch reads QFAANYFNKK…GLESAVGKNF (195 aa). The residue at position 184 (Ser-184) is a Phosphoserine. Residues 223 to 338, Glu-288, Arg-297, 341 to 457, Glu-407, and Arg-416 each bind 3',5'-cyclic AMP; these read LFNK…FLKS and LLKS…RADK.

The protein belongs to the cAMP-dependent kinase regulatory chain family. As to quaternary structure, tetramer, composed of 2 regulatory (R) and 2 catalytic (C) subunits. In the presence of cAMP it dissociates into 2 active monomeric C subunits and an R dimer.

The sequence is that of cAMP-dependent protein kinase regulatory subunit (PKAR) from Eremothecium gossypii (strain ATCC 10895 / CBS 109.51 / FGSC 9923 / NRRL Y-1056) (Yeast).